We begin with the raw amino-acid sequence, 588 residues long: Adenine deaminase (588 aa).

It belongs to the metallo-dependent hydrolases superfamily. Adenine deaminase family. Homodimer. It depends on Mn(2+) as a cofactor.

The enzyme catalyses adenine + H2O + H(+) = hypoxanthine + NH4(+). The polypeptide is Adenine deaminase (Escherichia coli O17:K52:H18 (strain UMN026 / ExPEC)).